Consider the following 1231-residue polypeptide: Multifunctional 2-oxoglutarate metabolism enzyme (1231 aa).

A 2-oxoglutarate dehydrogenase E1, N-terminal part region spans residues 1 to 41; it reads MANISSPFGQNEWLVEAMYRKFRDDPSSVDPSWHEFLVDYS. Residues 24–37 show a composition bias toward basic and acidic residues; it reads DDPSSVDPSWHEFL. The tract at residues 24 to 56 is disordered; sequence DDPSSVDPSWHEFLVDYSPEPTSQPAAEPTRVT. Residues 42 to 88 are linker; it reads PEPTSQPAAEPTRVTSPLVAERAAAAAPQAPPKPADTAAAGNGVVAA. Positions 89–337 are succinyltransferase E2; it reads LAAKTAVPPP…LRTIHELLLS (249 aa). His-316 functions as the Proton acceptor; for succinyltransferase activity in the catalytic mechanism. The segment at 338-1231 is 2-oxoglutarate dehydrogenase E1, C-terminal part; it reads DGFWDEVFRE…QQEILDEAFG (894 aa). Arg-542 provides a ligand contact to thiamine diphosphate. Residues His-581 and Ser-606 each contribute to the 2-oxoglutarate site. Positions 606, 608, 649, 650, 651, and 682 each coordinate thiamine diphosphate. Asp-649 contributes to the Mg(2+) binding site. Mg(2+) contacts are provided by Asn-682 and Ile-684. The stretch at 787–817 forms a coiled coil; sequence DISMKEAEDALRDYQGQLERVFNEVRELEKH. His-1024 contributes to the 2-oxoglutarate binding site. Residues Thr-1042, Arg-1058, Lys-1093, Ser-1096, Gln-1146, Arg-1153, and Arg-1154 each coordinate acetyl-CoA.

It belongs to the 2-oxoacid dehydrogenase family. Kgd subfamily. Homodimer. The 2-oxoglutarate dehydrogenase (ODH) complex contains multiple copies of three enzymatic components: 2-oxoglutarate dehydrogenase (E1), dihydrolipoamide succinyltransferase (E2) and lipoamide dehydrogenase (E3). Mg(2+) is required as a cofactor. Requires thiamine diphosphate as cofactor.

It catalyses the reaction glyoxylate + 2-oxoglutarate + H(+) = 2-hydroxy-3-oxoadipate + CO2. The catalysed reaction is 2-oxoglutarate + H(+) = succinate semialdehyde + CO2. The enzyme catalyses N(6)-[(R)-lipoyl]-L-lysyl-[protein] + 2-oxoglutarate + H(+) = N(6)-[(R)-S(8)-succinyldihydrolipoyl]-L-lysyl-[protein] + CO2. It carries out the reaction N(6)-[(R)-dihydrolipoyl]-L-lysyl-[protein] + succinyl-CoA = N(6)-[(R)-S(8)-succinyldihydrolipoyl]-L-lysyl-[protein] + CoA. Its pathway is carbohydrate metabolism; tricarboxylic acid cycle; succinate from 2-oxoglutarate (transferase route): step 1/2. It functions in the pathway carbohydrate metabolism; tricarboxylic acid cycle; succinyl-CoA from 2-oxoglutarate (dehydrogenase route): step 1/1. Alpha-ketoglutarate dehydrogenase and decarboxylase activities are inhibited by unphosphorylated GarA, and allosterically activated by acetyl-CoA, the main substrate of the TCA cycle. Shows three enzymatic activities that share a first common step, the attack of thiamine-PP on 2-oxoglutarate (alpha-ketoglutarate, KG), leading to the formation of an enamine-thiamine-PP intermediate upon decarboxylation. Thus, displays KGD activity, catalyzing the decarboxylation from five-carbon 2-oxoglutarate to four-carbon succinate semialdehyde (SSA). Also catalyzes C-C bond formation between the activated aldehyde formed after decarboxylation of alpha-ketoglutarate and the carbonyl of glyoxylate (GLX), to yield 2-hydroxy-3-oxoadipate (HOA), which spontaneously decarboxylates to form 5-hydroxylevulinate (HLA). And is also a component of the 2-oxoglutarate dehydrogenase (ODH) complex, that catalyzes the overall conversion of 2-oxoglutarate to succinyl-CoA and CO(2). The KG decarboxylase and KG dehydrogenase reactions provide two alternative, tightly regulated, pathways connecting the oxidative and reductive branches of the TCA cycle. The protein is Multifunctional 2-oxoglutarate metabolism enzyme (kgd) of Mycobacterium bovis (strain ATCC BAA-935 / AF2122/97).